Here is a 397-residue protein sequence, read N- to C-terminus: Elongation factor Tu (397 aa).

The tr-type G domain maps to 10 to 207; it reads LPHVNVGTIG…TLDSYIPEPV (198 aa). The segment at 19 to 26 is G1; that stretch reads GHVDHGKT. 19–26 is a GTP binding site; sequence GHVDHGKT. Residue T26 participates in Mg(2+) binding. The G2 stretch occupies residues 60–64; the sequence is GITIN. The segment at 81 to 84 is G3; sequence DCPG. GTP contacts are provided by residues 81 to 85 and 136 to 139; these read DCPGH and NKAD. Residues 136–139 are G4; it reads NKAD. Positions 174-176 are G5; that stretch reads SAR.

It belongs to the TRAFAC class translation factor GTPase superfamily. Classic translation factor GTPase family. EF-Tu/EF-1A subfamily. Monomer.

Its subcellular location is the cytoplasm. The enzyme catalyses GTP + H2O = GDP + phosphate + H(+). GTP hydrolase that promotes the GTP-dependent binding of aminoacyl-tRNA to the A-site of ribosomes during protein biosynthesis. In Pseudomonas putida (strain ATCC 700007 / DSM 6899 / JCM 31910 / BCRC 17059 / LMG 24140 / F1), this protein is Elongation factor Tu.